Here is a 775-residue protein sequence, read N- to C-terminus: Dipeptidyl peptidase 4 (775 aa).

The first 15 residues, 1 to 15 (MKFLSLLLLAGIAQA), serve as a signal peptide directing secretion. Asn-81, Asn-111, Asn-170, and Asn-219 each carry an N-linked (GlcNAc...) asparagine glycan. Residues Ser-613, Asp-690, and His-725 each act as charge relay system in the active site.

Belongs to the peptidase S9B family.

The protein localises to the secreted. The catalysed reaction is Release of an N-terminal dipeptide, Xaa-Yaa-|-Zaa-, from a polypeptide, preferentially when Yaa is Pro, provided Zaa is neither Pro nor hydroxyproline.. Its function is as follows. Extracellular dipeptidyl-peptidase which removes N-terminal dipeptides sequentially from polypeptides having unsubstituted N-termini provided that the penultimate residue is proline. Contributes to pathogenicity. The polypeptide is Dipeptidyl peptidase 4 (DPP4) (Trichophyton equinum (Horse ringworm fungus)).